Here is a 1287-residue protein sequence, read N- to C-terminus: DNA-directed RNA polymerase subunit beta (1287 aa).

This sequence belongs to the RNA polymerase beta chain family. As to quaternary structure, the RNAP catalytic core consists of 2 alpha, 1 beta, 1 beta' and 1 omega subunit. When a sigma factor is associated with the core the holoenzyme is formed, which can initiate transcription.

The enzyme catalyses RNA(n) + a ribonucleoside 5'-triphosphate = RNA(n+1) + diphosphate. Functionally, DNA-dependent RNA polymerase catalyzes the transcription of DNA into RNA using the four ribonucleoside triphosphates as substrates. This chain is DNA-directed RNA polymerase subunit beta, found in Salinibacter ruber (strain DSM 13855 / M31).